Consider the following 123-residue polypeptide: Diacylglycerol kinase (123 aa).

The chain crosses the membrane as a helical span at residues 15–32 (ILNATGYSLAGFLAAFRG). Glu33 is an a divalent metal cation binding site. Transmembrane regions (helical) follow at residues 35–55 (AFRQ…LLDV), 61–81 (ALMI…SAIE), and 102–122 (GSAA…TILL). Glu74 acts as the Proton acceptor in catalysis. Glu81 serves as a coordination point for a divalent metal cation.

This sequence belongs to the bacterial diacylglycerol kinase family. Mg(2+) serves as cofactor.

It localises to the cell inner membrane. It catalyses the reaction a 1,2-diacyl-sn-glycerol + ATP = a 1,2-diacyl-sn-glycero-3-phosphate + ADP + H(+). Its function is as follows. Catalyzes the ATP-dependent phosphorylation of sn-l,2-diacylglycerol (DAG) to phosphatidic acid. Involved in the recycling of diacylglycerol produced as a by-product during membrane-derived oligosaccharide (MDO) biosynthesis. The protein is Diacylglycerol kinase (dgkA) of Pseudomonas aeruginosa (strain ATCC 15692 / DSM 22644 / CIP 104116 / JCM 14847 / LMG 12228 / 1C / PRS 101 / PAO1).